The sequence spans 103 residues: Ig lambda chain C region (103 aa).

The 94-residue stretch at 6–99 folds into the Ig-like domain; sequence PTITLFPPSK…NGTSITKTLK (94 aa). A disulfide bridge connects residues Cys-28 and Cys-85.

The sequence is that of Ig lambda chain C region from Gallus gallus (Chicken).